We begin with the raw amino-acid sequence, 95 residues long: Small ribosomal subunit protein bS6 (95 aa).

Belongs to the bacterial ribosomal protein bS6 family.

In terms of biological role, binds together with bS18 to 16S ribosomal RNA. In Oceanobacillus iheyensis (strain DSM 14371 / CIP 107618 / JCM 11309 / KCTC 3954 / HTE831), this protein is Small ribosomal subunit protein bS6.